Consider the following 244-residue polypeptide: tRNA pseudouridine synthase A (244 aa).

Asp-52 functions as the Nucleophile in the catalytic mechanism. Tyr-110 contributes to the substrate binding site.

Belongs to the tRNA pseudouridine synthase TruA family. As to quaternary structure, homodimer.

The enzyme catalyses uridine(38/39/40) in tRNA = pseudouridine(38/39/40) in tRNA. Formation of pseudouridine at positions 38, 39 and 40 in the anticodon stem and loop of transfer RNAs. This Thermoanaerobacter pseudethanolicus (strain ATCC 33223 / 39E) (Clostridium thermohydrosulfuricum) protein is tRNA pseudouridine synthase A.